We begin with the raw amino-acid sequence, 89 residues long: Small ribosomal subunit protein uS15 (89 aa).

This sequence belongs to the universal ribosomal protein uS15 family. In terms of assembly, part of the 30S ribosomal subunit. Forms a bridge to the 50S subunit in the 70S ribosome, contacting the 23S rRNA.

Functionally, one of the primary rRNA binding proteins, it binds directly to 16S rRNA where it helps nucleate assembly of the platform of the 30S subunit by binding and bridging several RNA helices of the 16S rRNA. Its function is as follows. Forms an intersubunit bridge (bridge B4) with the 23S rRNA of the 50S subunit in the ribosome. This Shewanella loihica (strain ATCC BAA-1088 / PV-4) protein is Small ribosomal subunit protein uS15.